Consider the following 299-residue polypeptide: Nucleotide-binding protein SCO1952 (299 aa).

Residue 23–30 coordinates ATP; it reads GMSGAGRS. 74–77 lines the GTP pocket; sequence DVRG.

It belongs to the RapZ-like family.

In terms of biological role, displays ATPase and GTPase activities. This is Nucleotide-binding protein SCO1952 from Streptomyces coelicolor (strain ATCC BAA-471 / A3(2) / M145).